The chain runs to 359 residues: 3-dehydroquinate synthase (359 aa).

NAD(+)-binding positions include 71–76, 105–109, 129–130, Lys142, Lys151, and 169–172; these read DGEAHK, GVIGD, TT, and TLHT. Zn(2+) is bound by residues Glu184, His247, and His264.

Belongs to the sugar phosphate cyclases superfamily. Dehydroquinate synthase family. Co(2+) serves as cofactor. The cofactor is Zn(2+). Requires NAD(+) as cofactor.

It is found in the cytoplasm. It catalyses the reaction 7-phospho-2-dehydro-3-deoxy-D-arabino-heptonate = 3-dehydroquinate + phosphate. It participates in metabolic intermediate biosynthesis; chorismate biosynthesis; chorismate from D-erythrose 4-phosphate and phosphoenolpyruvate: step 2/7. Functionally, catalyzes the conversion of 3-deoxy-D-arabino-heptulosonate 7-phosphate (DAHP) to dehydroquinate (DHQ). This is 3-dehydroquinate synthase from Neisseria meningitidis serogroup C (strain 053442).